The following is a 243-amino-acid chain: UMP-CMP kinase 1 (243 aa).

Residue 29-34 participates in ATP binding; sequence GSGKGT. The segment at 49–78 is NMP; sequence SAGDLLREEAKYDTEQGTMIKNLMNEGKLV. Residues Arg-55, 76 to 78, and 103 to 106 each bind a ribonucleoside 5'-phosphate; these read KLV and GFPR. Asn-110 contacts CMP. Positions 141–149 are LID; it reads NRNQGRDDD. Residue Arg-142 coordinates ATP. Positions 146 and 157 each coordinate a ribonucleoside 5'-phosphate. Arg-185 contributes to the ATP binding site.

This sequence belongs to the adenylate kinase family. UMP-CMP kinase subfamily. Monomer. Mg(2+) is required as a cofactor.

It localises to the cytoplasm. The protein resides in the nucleus. The catalysed reaction is UMP + ATP = UDP + ADP. The enzyme catalyses CMP + ATP = CDP + ADP. It carries out the reaction dCMP + ATP = dCDP + ADP. Functionally, catalyzes the phosphorylation of pyrimidine nucleoside monophosphates at the expense of ATP. Plays an important role in de novo pyrimidine nucleotide biosynthesis. Has preference for UMP and CMP as phosphate acceptors. In Oryza sativa subsp. japonica (Rice), this protein is UMP-CMP kinase 1.